Here is a 435-residue protein sequence, read N- to C-terminus: 5-hydroxybenzimidazole synthase (435 aa).

Residues M95, Y124, H163, S186–G188, N227–R230, and E266 each bind substrate. Zn(2+) is bound at residue H270. Position 293 (Y293) interacts with substrate. H334 provides a ligand contact to Zn(2+). [4Fe-4S] cluster contacts are provided by C410, C413, and C417.

Belongs to the ThiC family. 5-hydroxybenzimidazole synthase subfamily. As to quaternary structure, homodimer. Requires [4Fe-4S] cluster as cofactor.

It carries out the reaction 5-amino-1-(5-phospho-beta-D-ribosyl)imidazole + AH2 + S-adenosyl-L-methionine = 5-hydroxybenzimidazole + 5'-deoxyadenosine + formate + L-methionine + A + NH4(+) + phosphate + 2 H(+). It participates in cofactor biosynthesis; adenosylcobalamin biosynthesis. Functionally, catalyzes the complex conversion of aminoimidazole ribotide (AIR) to 5-hydroxybenzimidazole (5-HBI) in a radical S-adenosyl-L-methionine (SAM)-dependent reaction. Is thus involved in the anaerobic biosynthesis of dimethylbenzimidazole (DMB), the lower axial ligand of vitamin B12 (cobalamin). The polypeptide is 5-hydroxybenzimidazole synthase (Desulfuromonas acetoxidans (strain DSM 684 / 11070)).